The primary structure comprises 418 residues: 26S proteasome regulatory subunit 6B (418 aa).

Methionine 1 carries the N-acetylmethionine modification. At serine 21 the chain carries Phosphoserine. Threonine 25 is subject to Phosphothreonine. At serine 28 the chain carries Phosphoserine. ATP is bound at residue 206–213; that stretch reads GPPGCGKT. 2 positions are modified to N6-acetyllysine: lysine 397 and lysine 401.

Belongs to the AAA ATPase family. Component of the 19S proteasome regulatory particle complex. The 26S proteasome consists of a 20S core particle (CP) and two 19S regulatory subunits (RP). The regulatory particle is made of a lid composed of 9 subunits, a base containing 6 ATPases including PSMC4 and few additional components. Interacts with NR1I3. Interacts with PAAF1. Interacts with TRIM5. Interacts with ZFAND1.

Its subcellular location is the cytoplasm. The protein localises to the nucleus. Component of the 26S proteasome, a multiprotein complex involved in the ATP-dependent degradation of ubiquitinated proteins. This complex plays a key role in the maintenance of protein homeostasis by removing misfolded or damaged proteins, which could impair cellular functions, and by removing proteins whose functions are no longer required. Therefore, the proteasome participates in numerous cellular processes, including cell cycle progression, apoptosis, or DNA damage repair. PSMC4 belongs to the heterohexameric ring of AAA (ATPases associated with diverse cellular activities) proteins that unfolds ubiquitinated target proteins that are concurrently translocated into a proteolytic chamber and degraded into peptides. The protein is 26S proteasome regulatory subunit 6B (Psmc4) of Mus musculus (Mouse).